Consider the following 362-residue polypeptide: MFDGARLAQGLPYYISQVVFYPFEIYNSMSIVDVISRQDELDSPKAKPHVNATVFDSWWFDAVSNNLTKESITVVFYNAGPESIGAPDLGGPLFVEISGTFDNGTKFTIGSTAPEGAVIESGTQGIRGDWMGSGCSFTGSDLHRPSPEYTVSIDNAGLGVFGKLTLQSVSPPHFAGGSNKPGVSPELIPNIYAAFAQPDAAAVVDFTINGKTLKFNGVGHHEKNWGTAALEASVKAWYWGHGRVGPYSLVWFDGVTPGGKEYFASLITENGKIVSQSCEPNSVVVRPWGENDEFPPVRGAAAPAGYTLRYALGHGMAFVANFTREVSQVEADTYKRMIGSFSGGMEGGEQYEGRALCDQFQF.

His220 is an active-site residue. Glu222 acts as the Broensted acid in catalysis.

Belongs to the quinolone epoxide rearrangement protein penF family.

The catalysed reaction is [(1'E)-5'-(3',3'-dimethyloxiran-2'-yl)-3'-hydroxy-3'-methylpent-1'-en-1'-yl]-quinolinone B = yaequinolone D. The protein operates within secondary metabolite biosynthesis. It participates in alkaloid biosynthesis. It functions in the pathway mycotoxin biosynthesis. In terms of biological role, quinolone epoxide rearrangement protein; part of the gene cluster that mediates the biosynthesis of penigequinolones, potent insecticidal alkaloids that contain a highly modified 10-carbon prenyl group. The first stage is catalyzed by the nonribosomal peptide synthetase penN that condenses anthranilic acid and O-methyl-L-tyrosine to produce 4'-methoxycyclopeptin. 4'-methoxycyclopeptin is then converted to 4'-methoxydehydrocyclopeptin by the ketoglutarate-dependent dioxygenase penM through dehydrogenation to form a double bond between C-alpha and C-beta of the O-methyltyrosine side chain. PenM also converts its first product methoxydehydrocyclopeptin to 4'-methoxycyclopenin. The following conversion of 4'methoxycyclopenin into 4'-methoxyviridicatin is catalyzed by the cyclopenase penL. 4'-methoxyviridicatin is the precursor of quinolone natural products, and is further converted to quinolinone B. The prenyltransferase penI then catalyzes the canonical Friedel-Crafts alkylation of quinolinone B with dimethylallyl cation to yield dimethylallyl quinolone, which is subjected to FAD-dependent dehydrogenation by the FAD-linked oxidoreductase penH to yield conjugated aryl diene. The delta(3') double bond then serves as the site of the second alkylation with DMAPP catalyzed by the prenyltransferase penG to yield a carbenium ion intermediate, which can be attacked by H(2)O to yield a styrenyl quinolone containing a C3'-hydroxyprenyl chain, or undergo cyclization to yield yaequinolones J1 and J2. The conversion of the styrenyl quinolone into the tetrahydrofuran-containing yaequinolone C is performed by the FAD-dependent monooxygenase penE and involves epoxidation of the terminal C7'-C8' olefin, followed by epoxide ring opening initiated by the C3' hydroxyl group. The predicted cysteine hydrolase penJ acts as an epoxide hydrolase that enhances the rate of the 5-exo-tet cyclization step, increasing the yield of yaequinolone C. PenF catalyzes the cationic rearrangement of the epoxide formed by penE (before ring opening to produce yaequinolone C) into yaequinolone D. Finally, the short-chain dehydrogenase/reductase (SDR)-like reductase penD, catalyzes both the dehydration of yaequinolone D and the reduction of the resulting oxonium to yield penigequinolone. The polypeptide is Quinolone epoxide rearrangement protein penF (Penicillium thymicola).